The primary structure comprises 462 residues: Kremen protein 2 (462 aa).

An N-terminal signal peptide occupies residues 1-25; that stretch reads MGTQALQGFLFLLFLPLLQPRGASA. Residues 26–364 lie on the Extracellular side of the membrane; that stretch reads GSLHSPGLSE…SPRPGAPPAA (339 aa). Positions 35–119 constitute a Kringle domain; that stretch reads ECFQVNGADY…YWRYCDIPSC (85 aa). 3 disulfide bridges follow: C36/C119, C60/C100, and C89/C114. N49 carries N-linked (GlcNAc...) asparagine glycosylation. The 95-residue stretch at 121–215 folds into the WSC domain; sequence MPGYLGCFVD…DGRLGVYEVS (95 aa). The cysteines at positions 219 and 245 are disulfide-linked. The CUB domain maps to 219-326; it reads CQGNWTAPQG…QGFALTYRGL (108 aa). N222, N244, and N351 each carry an N-linked (GlcNAc...) asparagine glycan. The disordered stretch occupies residues 328–352; it reads DAAEDPEAPEGSAQTPAAPLDGANV. The chain crosses the membrane as a helical span at residues 365 to 387; the sequence is IGARVFSTVTAVSVLLLLLLGLL. Residues 388–462 lie on the Cytoplasmic side of the membrane; sequence RPLRRRSCLL…SSLRSLISAL (75 aa).

In terms of assembly, interacts with ERLEC1. Forms a ternary complex with DKK1 and LRP6.

It is found in the membrane. In terms of biological role, receptor for Dickkopf proteins. Cooperates with DKK1/2 to inhibit Wnt/beta-catenin signaling by promoting the endocytosis of Wnt receptors LRP5 and LRP6. Plays a role in limb development; attenuates Wnt signaling in the developing limb to allow normal limb patterning and can also negatively regulate bone formation. The polypeptide is Kremen protein 2 (KREMEN2) (Homo sapiens (Human)).